The following is a 254-amino-acid chain: 5'-nucleotidase SurE (254 aa).

A divalent metal cation-binding residues include Asp8, Asp9, Ser39, and Asn97.

This sequence belongs to the SurE nucleotidase family. It depends on a divalent metal cation as a cofactor.

It is found in the cytoplasm. The catalysed reaction is a ribonucleoside 5'-phosphate + H2O = a ribonucleoside + phosphate. In terms of biological role, nucleotidase that shows phosphatase activity on nucleoside 5'-monophosphates. The polypeptide is 5'-nucleotidase SurE (Alkaliphilus metalliredigens (strain QYMF)).